A 277-amino-acid chain; its full sequence is Large ribosomal subunit protein uL2 (277 aa).

The interval Ser223–Lys261 is disordered.

It belongs to the universal ribosomal protein uL2 family. Part of the 50S ribosomal subunit. Forms a bridge to the 30S subunit in the 70S ribosome.

Its function is as follows. One of the primary rRNA binding proteins. Required for association of the 30S and 50S subunits to form the 70S ribosome, for tRNA binding and peptide bond formation. It has been suggested to have peptidyltransferase activity; this is somewhat controversial. Makes several contacts with the 16S rRNA in the 70S ribosome. The sequence is that of Large ribosomal subunit protein uL2 from Clostridium botulinum (strain Alaska E43 / Type E3).